Here is a 562-residue protein sequence, read N- to C-terminus: 4-coumarate--CoA ligase-like 9 (562 aa).

Positions 212, 213, 214, 215, 216, and 220 each coordinate ATP. R281 is a CoA binding site. Residues 283-352 (ELEAMFKAVE…QKFPDVDIVQ (70 aa)) are SBD1. ATP is bound by residues Q352, G353, T357, D438, and R453. The segment at 353–417 (GYGLTESSGP…LRGPVIMKGY (65 aa)) is SBD2. Residues K461 and A462 each contribute to the CoA site. An ATP-binding site is contributed by K544. The Microbody targeting signal motif lies at 560-562 (SKL).

Belongs to the ATP-dependent AMP-binding enzyme family. It depends on Mg(2+) as a cofactor. Expressed at low level in leaves.

It localises to the peroxisome. The catalysed reaction is (9S,13S,15Z)-12-oxophyto-10,15-dienoate + ATP + CoA = (10Z,15Z)-12-oxophytodienoyl-CoA + AMP + diphosphate. It catalyses the reaction hexadecanoate + ATP + CoA = hexadecanoyl-CoA + AMP + diphosphate. It carries out the reaction (9Z)-octadecenoate + ATP + CoA = (9Z)-octadecenoyl-CoA + AMP + diphosphate. The enzyme catalyses octadecanoate + ATP + CoA = octadecanoyl-CoA + AMP + diphosphate. The catalysed reaction is tetradecanoate + ATP + CoA = tetradecanoyl-CoA + AMP + diphosphate. It catalyses the reaction dodecanoate + ATP + CoA = dodecanoyl-CoA + AMP + diphosphate. It carries out the reaction decanoate + ATP + CoA = decanoyl-CoA + AMP + diphosphate. The enzyme catalyses octanoate + ATP + CoA = octanoyl-CoA + AMP + diphosphate. The catalysed reaction is (9Z,12Z)-octadecadienoate + ATP + CoA = (9Z,12Z)-octadecadienoyl-CoA + AMP + diphosphate. It catalyses the reaction (9Z,12Z,15Z)-octadecatrienoate + ATP + CoA = (9Z,12Z,15Z)-octadecatrienoyl-CoA + AMP + diphosphate. It carries out the reaction nonanoate + ATP + CoA = nonanoyl-CoA + AMP + diphosphate. In terms of biological role, contributes to jasmonic acid biosynthesis by initiating the beta-oxidative chain shortening of its precursors. Converts 12-oxo-phytodienoic acid (OPDA) into OPDA-CoA. Follows a two-step reaction mechanism, wherein the carboxylate substrate first undergoes adenylation by ATP, followed by a thioesterification in the presence of CoA to yield the final CoA thioester. The protein is 4-coumarate--CoA ligase-like 9 of Arabidopsis thaliana (Mouse-ear cress).